The sequence spans 265 residues: HUWE1-associated protein modifying stress responses (265 aa).

Disordered regions lie at residues 1–22, 145–170, 195–218, and 240–265; these read MEDK…HWFS, RNSR…GSSV, VRSS…RRNG, and GTRK…NRMI. Polar residues-rich tracts occupy residues 156–170 and 195–212; these read VSPN…GSSV and VRSS…SSNT.

The protein belongs to the HAPSTR1 family. Oligomer.

Its subcellular location is the nucleus. The protein resides in the cytoplasm. In terms of biological role, acts as a central player within a network of stress response pathways promoting cellular adaptability. Functions as a negative regulator of TP53/P53 in the cellular response to telomere erosion and probably also DNA damage. In Xenopus tropicalis (Western clawed frog), this protein is HUWE1-associated protein modifying stress responses.